The chain runs to 101 residues: Putative pterin-4-alpha-carbinolamine dehydratase (101 aa).

Belongs to the pterin-4-alpha-carbinolamine dehydratase family.

It catalyses the reaction (4aS,6R)-4a-hydroxy-L-erythro-5,6,7,8-tetrahydrobiopterin = (6R)-L-erythro-6,7-dihydrobiopterin + H2O. In Rhodopseudomonas palustris (strain BisA53), this protein is Putative pterin-4-alpha-carbinolamine dehydratase.